A 197-amino-acid chain; its full sequence is Nucleoside triphosphate pyrophosphatase (197 aa).

Asp75 acts as the Proton acceptor in catalysis.

The protein belongs to the Maf family. It depends on a divalent metal cation as a cofactor.

It is found in the cytoplasm. The catalysed reaction is a ribonucleoside 5'-triphosphate + H2O = a ribonucleoside 5'-phosphate + diphosphate + H(+). The enzyme catalyses a 2'-deoxyribonucleoside 5'-triphosphate + H2O = a 2'-deoxyribonucleoside 5'-phosphate + diphosphate + H(+). Nucleoside triphosphate pyrophosphatase. May have a dual role in cell division arrest and in preventing the incorporation of modified nucleotides into cellular nucleic acids. The sequence is that of Nucleoside triphosphate pyrophosphatase from Haemophilus ducreyi (strain 35000HP / ATCC 700724).